The sequence spans 415 residues: Thyroxine-binding globulin (415 aa).

Positions 1–20 (MSPFLYLVLLVLGLHATIHC) are cleaved as a signal peptide. N-linked (GlcNAc...) asparagine glycosylation is found at asparagine 36, asparagine 99, asparagine 165, and asparagine 253. Thyroxine-binding residues include asparagine 293 and arginine 398.

Belongs to the serpin family.

Its subcellular location is the secreted. Major thyroid hormone transport protein in serum. The sequence is that of Thyroxine-binding globulin (SERPINA7) from Pan troglodytes (Chimpanzee).